Consider the following 267-residue polypeptide: Hydroxyethylthiazole kinase 2 (267 aa).

A substrate-binding site is contributed by Met-41. 2 residues coordinate ATP: Lys-116 and Thr-166. A substrate-binding site is contributed by Gly-193.

This sequence belongs to the Thz kinase family. Mg(2+) serves as cofactor.

It catalyses the reaction 5-(2-hydroxyethyl)-4-methylthiazole + ATP = 4-methyl-5-(2-phosphooxyethyl)-thiazole + ADP + H(+). The protein operates within cofactor biosynthesis; thiamine diphosphate biosynthesis; 4-methyl-5-(2-phosphoethyl)-thiazole from 5-(2-hydroxyethyl)-4-methylthiazole: step 1/1. In terms of biological role, catalyzes the phosphorylation of the hydroxyl group of 4-methyl-5-beta-hydroxyethylthiazole (THZ). This is Hydroxyethylthiazole kinase 2 from Streptococcus pneumoniae (strain Taiwan19F-14).